The sequence spans 228 residues: MKISILSLFPELYETWIKHSIISNAIKNNQVIIEVIDFRLYTNDKHKKVDDYQYGGGAGMVLRIEPIVAAIRAIRSSNSYVILTTPKGQVFNQELANNFVSKYDHIIIIAGHYEGFDERINYYIDAQYSIGDFVLTGGELPSMVISDAVIRLLDGVISPSSLETESFNNYLLDYPVYTRPLVFEGHKVPDILLSGHHKNIADFRKQQQETITKKNRPDLYQKYLNNKK.

Residues Gly-111 and 130–135 (IGDFVL) each bind S-adenosyl-L-methionine.

The protein belongs to the RNA methyltransferase TrmD family. In terms of assembly, homodimer.

The protein resides in the cytoplasm. The enzyme catalyses guanosine(37) in tRNA + S-adenosyl-L-methionine = N(1)-methylguanosine(37) in tRNA + S-adenosyl-L-homocysteine + H(+). Specifically methylates guanosine-37 in various tRNAs. The sequence is that of tRNA (guanine-N(1)-)-methyltransferase from Ureaplasma parvum serovar 3 (strain ATCC 27815 / 27 / NCTC 11736).